Consider the following 136-residue polypeptide: Large ribosomal subunit protein bL21 (136 aa).

Belongs to the bacterial ribosomal protein bL21 family. Part of the 50S ribosomal subunit. Contacts protein L20.

Its function is as follows. This protein binds to 23S rRNA in the presence of protein L20. This is Large ribosomal subunit protein bL21 from Gloeothece citriformis (strain PCC 7424) (Cyanothece sp. (strain PCC 7424)).